The primary structure comprises 146 residues: 3-dehydroquinate dehydratase (146 aa).

The Proton acceptor role is filled by tyrosine 23. Substrate-binding residues include asparagine 74, histidine 80, and aspartate 87. Histidine 100 functions as the Proton donor in the catalytic mechanism. Residues 101–102 (IS) and arginine 111 contribute to the substrate site.

It belongs to the type-II 3-dehydroquinase family. Homododecamer.

It catalyses the reaction 3-dehydroquinate = 3-dehydroshikimate + H2O. The protein operates within metabolic intermediate biosynthesis; chorismate biosynthesis; chorismate from D-erythrose 4-phosphate and phosphoenolpyruvate: step 3/7. Functionally, catalyzes a trans-dehydration via an enolate intermediate. The sequence is that of 3-dehydroquinate dehydratase from Bacillus mycoides (strain KBAB4) (Bacillus weihenstephanensis).